Consider the following 224-residue polypeptide: Flagellar L-ring protein (224 aa).

The N-terminal stretch at 1–15 is a signal peptide; sequence MARYFILAVALLLTA. C16 carries the N-palmitoyl cysteine lipid modification. Residue C16 is the site of S-diacylglycerol cysteine attachment.

It belongs to the FlgH family. As to quaternary structure, the basal body constitutes a major portion of the flagellar organelle and consists of four rings (L,P,S, and M) mounted on a central rod.

The protein localises to the cell outer membrane. The protein resides in the bacterial flagellum basal body. Functionally, assembles around the rod to form the L-ring and probably protects the motor/basal body from shearing forces during rotation. This chain is Flagellar L-ring protein, found in Shewanella sp. (strain MR-7).